The sequence spans 202 residues: 3-isopropylmalate dehydratase small subunit 2 (202 aa).

It belongs to the LeuD family. LeuD type 1 subfamily. In terms of assembly, heterodimer of LeuC and LeuD.

The catalysed reaction is (2R,3S)-3-isopropylmalate = (2S)-2-isopropylmalate. It functions in the pathway amino-acid biosynthesis; L-leucine biosynthesis; L-leucine from 3-methyl-2-oxobutanoate: step 2/4. Catalyzes the isomerization between 2-isopropylmalate and 3-isopropylmalate, via the formation of 2-isopropylmaleate. The protein is 3-isopropylmalate dehydratase small subunit 2 of Bordetella parapertussis (strain 12822 / ATCC BAA-587 / NCTC 13253).